Consider the following 82-residue polypeptide: Cysteine proteinase inhibitor A (82 aa).

The protein belongs to the cystatin family.

Strong inhibitor of papain and ficin but poor inhibitor of cathepsin H, B and L. The protein is Cysteine proteinase inhibitor A of Helianthus annuus (Common sunflower).